The primary structure comprises 297 residues: HTH-type transcriptional regulator ArgP (297 aa).

An HTH lysR-type domain is found at 4-60 (PDYRTLQALDAVIRERGFERAAQKLCITQSAVSQRIKQLENMFGQPLLVRTVPPRPT). Positions 21–40 (FERAAQKLCITQSAVSQRIK) form a DNA-binding region, H-T-H motif.

This sequence belongs to the LysR transcriptional regulatory family. Homodimer.

Functionally, controls the transcription of genes involved in arginine and lysine metabolism. This Klebsiella pneumoniae subsp. pneumoniae (strain ATCC 700721 / MGH 78578) protein is HTH-type transcriptional regulator ArgP.